Here is a 232-residue protein sequence, read N- to C-terminus: 2,3-bisphosphoglycerate-dependent phosphoglycerate mutase (232 aa).

Substrate-binding positions include 8 to 15 (RHGESLWN), 21 to 22 (TG), R60, 87 to 90 (ERHY), K98, 114 to 115 (RR), and 183 to 184 (GN). H9 acts as the Tele-phosphohistidine intermediate in catalysis. E87 functions as the Proton donor/acceptor in the catalytic mechanism.

Belongs to the phosphoglycerate mutase family. BPG-dependent PGAM subfamily.

The catalysed reaction is (2R)-2-phosphoglycerate = (2R)-3-phosphoglycerate. It functions in the pathway carbohydrate degradation; glycolysis; pyruvate from D-glyceraldehyde 3-phosphate: step 3/5. Its function is as follows. Catalyzes the interconversion of 2-phosphoglycerate and 3-phosphoglycerate. This chain is 2,3-bisphosphoglycerate-dependent phosphoglycerate mutase, found in Clostridium beijerinckii (strain ATCC 51743 / NCIMB 8052) (Clostridium acetobutylicum).